Reading from the N-terminus, the 579-residue chain is Ribonucleoside-diphosphate reductase small chain (579 aa).

The Fe cation site is built by aspartate 130, glutamate 160, and histidine 163. Tyrosine 167 is an active-site residue. Fe cation is bound by residues glutamate 225, glutamate 258, and histidine 261. The Fido domain occupies 435–579 (DMTWTLKDVH…VSVFVDQFYR (145 aa)).

This sequence belongs to the ribonucleoside diphosphate reductase small chain family. In terms of assembly, heterotetramer composed of a homodimer of the large subunit (R1) and a homodimer of the small subunit (R2). Larger multisubunit protein complex are also active, composed of (R1)n(R2)n. Fe cation is required as a cofactor.

It catalyses the reaction a 2'-deoxyribonucleoside 5'-diphosphate + [thioredoxin]-disulfide + H2O = a ribonucleoside 5'-diphosphate + [thioredoxin]-dithiol. Ribonucleoside-diphosphate reductase holoenzyme provides the precursors necessary for viral DNA synthesis. Allows virus growth in non-dividing cells. Catalyzes the biosynthesis of deoxyribonucleotides from the corresponding ribonucleotides. This is Ribonucleoside-diphosphate reductase small chain from Magallana gigas (Pacific oyster).